Consider the following 253-residue polypeptide: Methionine aminopeptidase A (253 aa).

Histidine 80 is a substrate binding site. A divalent metal cation contacts are provided by aspartate 98, aspartate 109, and histidine 172. Histidine 179 provides a ligand contact to substrate. A divalent metal cation contacts are provided by glutamate 205 and glutamate 236.

This sequence belongs to the peptidase M24A family. Methionine aminopeptidase type 1 subfamily. Monomer. Co(2+) serves as cofactor. The cofactor is Zn(2+). Mn(2+) is required as a cofactor. Requires Fe(2+) as cofactor.

It carries out the reaction Release of N-terminal amino acids, preferentially methionine, from peptides and arylamides.. Functionally, removes the N-terminal methionine from nascent proteins. The N-terminal methionine is often cleaved when the second residue in the primary sequence is small and uncharged (Met-Ala-, Cys, Gly, Pro, Ser, Thr, or Val). Requires deformylation of the N(alpha)-formylated initiator methionine before it can be hydrolyzed. The sequence is that of Methionine aminopeptidase A from Synechocystis sp. (strain ATCC 27184 / PCC 6803 / Kazusa).